The following is a 132-amino-acid chain: Group 2 truncated hemoglobin YjbI (132 aa).

Positions 45, 48, 63, and 76 each coordinate heme.

Belongs to the truncated hemoglobin family. Group II subfamily. Monomer. It depends on heme as a cofactor.

In terms of biological role, hemoglobin-like protein that exhibits a low peroxidase activity. Its very high oxygen affinity may rule out the possibility that it is involved in oxygen transport. The chain is Group 2 truncated hemoglobin YjbI (yjbI) from Bacillus subtilis (strain 168).